A 404-amino-acid polypeptide reads, in one-letter code: Zinc finger CCCH domain-containing protein 15 homolog (404 aa).

Residues 1–10 (MPPKKAPPGP) are compositionally biased toward pro residues. The tract at residues 1–71 (MPPKKAPPGP…KRKEEKEKKL (71 aa)) is disordered. Residues 12–28 (KKTEQKKKEKVIEDKTF) are compositionally biased toward basic and acidic residues. The span at 38–50 (QQKFIQQVQKQVQ) shows a compositional bias: low complexity. Basic and acidic residues predominate over residues 56–71 (PRQDGDKRKEEKEKKL). C3H1-type zinc fingers lie at residues 94 to 121 (DPKS…HDLS) and 165 to 202 (PTTD…HALP). Phosphothreonine is present on threonine 218. A Phosphoserine modification is found at serine 221. The stretch at 246–270 (LAWKKRKIAEKKAKLAAEEERKKSD) forms a coiled coil. Composition is skewed to low complexity over residues 352–361 (EAAKTAAAED) and 369–380 (PSSSAPANDAAP). The tract at residues 352 to 380 (EAAKTAAAEDAAADEDGPSSSAPANDAAP) is disordered.

This sequence belongs to the ZC3H15/TMA46 family.

The protein is Zinc finger CCCH domain-containing protein 15 homolog of Drosophila melanogaster (Fruit fly).